The sequence spans 75 residues: Large ribosomal subunit protein bL31 (75 aa).

This sequence belongs to the bacterial ribosomal protein bL31 family. Type A subfamily. As to quaternary structure, part of the 50S ribosomal subunit.

In terms of biological role, binds the 23S rRNA. This Rhodopseudomonas palustris (strain BisB18) protein is Large ribosomal subunit protein bL31.